We begin with the raw amino-acid sequence, 586 residues long: Asparagine synthetase [glutamine-hydrolyzing] (586 aa).

The active-site For GATase activity is C2. A Glutamine amidotransferase type-2 domain is found at 2–185 (CGILAVLGVV…PGHLYSSKTG (184 aa)). L-glutamine-binding positions include 50–54 (RLAII), 75–77 (NGE), and D98. Residues 193–516 (PPWFSETVPS…PQDSARETVP (324 aa)) form the Asparagine synthetase domain. ATP contacts are provided by residues L231, I267, and 341–342 (SG).

It catalyses the reaction L-aspartate + L-glutamine + ATP + H2O = L-asparagine + L-glutamate + AMP + diphosphate + H(+). The protein operates within amino-acid biosynthesis; L-asparagine biosynthesis; L-asparagine from L-aspartate (L-Gln route): step 1/1. Essential for nitrogen assimilation, distribution and remobilization within the plant via the phloem. This is Asparagine synthetase [glutamine-hydrolyzing] (ASN1) from Zea mays (Maize).